The chain runs to 320 residues: ATP synthase gamma chain (320 aa).

It belongs to the ATPase gamma chain family. F-type ATPases have 2 components, CF(1) - the catalytic core - and CF(0) - the membrane proton channel. CF(1) has five subunits: alpha(3), beta(3), gamma(1), delta(1), epsilon(1). CF(0) has three main subunits: a, b and c.

Its subcellular location is the cell membrane. Functionally, produces ATP from ADP in the presence of a proton gradient across the membrane. The gamma chain is believed to be important in regulating ATPase activity and the flow of protons through the CF(0) complex. In Lactobacillus delbrueckii subsp. bulgaricus (strain ATCC 11842 / DSM 20081 / BCRC 10696 / JCM 1002 / NBRC 13953 / NCIMB 11778 / NCTC 12712 / WDCM 00102 / Lb 14), this protein is ATP synthase gamma chain.